Here is a 193-residue protein sequence, read N- to C-terminus: Probable GTP-binding protein EngB (193 aa).

The 174-residue stretch at 20–193 (GVPEVAFAGR…ELAHEISRCI (174 aa)) folds into the EngB-type G domain. GTP is bound by residues 28–35 (GRSNVGKS), 55–59 (GSTRQ), 73–76 (DLPG), 140–143 (TKAD), and 171–176 (IMWVSS). Positions 35 and 57 each coordinate Mg(2+).

This sequence belongs to the TRAFAC class TrmE-Era-EngA-EngB-Septin-like GTPase superfamily. EngB GTPase family. Mg(2+) is required as a cofactor.

Its function is as follows. Necessary for normal cell division and for the maintenance of normal septation. In Anaplasma phagocytophilum (strain HZ), this protein is Probable GTP-binding protein EngB.